The primary structure comprises 121 residues: Non-specific lipid-transfer protein 3 (121 aa).

The N-terminal stretch at 1-28 (MAGARRTMALVALVAVVAAAVVAERASA) is a signal peptide. 4 disulfide bridges follow: Cys32/Cys80, Cys42/Cys57, Cys58/Cys103, and Cys78/Cys117.

It belongs to the plant LTP family.

Its function is as follows. Plant non-specific lipid-transfer proteins transfer phospholipids as well as galactolipids across membranes. May play a role in wax or cutin deposition in the cell walls of expanding epidermal cells and certain secretory tissues. May possess an antifungal activity and protect the plant against pathogens. This Oryza sativa subsp. indica (Rice) protein is Non-specific lipid-transfer protein 3 (LTP110-A).